The primary structure comprises 414 residues: NAC domain-containing protein 35 (414 aa).

Positions 1-21 (MAIVSSTTSIIPMSNQVNNNE) are enriched in polar residues. Positions 1–47 (MAIVSSTTSIIPMSNQVNNNEKGIEDNDHRGGQESHVQNEDEADDHD) are disordered. Residues 22-47 (KGIEDNDHRGGQESHVQNEDEADDHD) show a composition bias toward basic and acidic residues. Positions 51–198 (VMPGFRFHPT…EISLCRVYKR (148 aa)) constitute an NAC domain. Residues 149 to 204 (IGLKKTLVFYSGKAPKGTRTSWIMNEYRLPHHETEKYQKAEISLCRVYKRPGVEDH) mediate DNA binding. Residues 200–251 (GVEDHPSVPRSLSTRHHNHNSSTSSRLALRQQQHHSSSSNHSDNNLNNNNNI) are disordered. Over residues 233–251 (HHSSSSNHSDNNLNNNNNI) the composition is skewed to low complexity.

In terms of tissue distribution, expressed in aerial organs in early stages of seedling development.

It is found in the nucleus. Its function is as follows. Transcription factor that acts as a floral repressor. Controls flowering time by negatively regulating CONSTANS (CO) expression in a GIGANTEA (GI)-independent manner. Regulates the plant cold response by positive regulation of the cold response genes COR15A and KIN1. May coordinate cold response and flowering time. The chain is NAC domain-containing protein 35 from Arabidopsis thaliana (Mouse-ear cress).